The sequence spans 625 residues: Endoglucanase 13 (625 aa).

An N-terminal signal peptide occupies residues 1 to 34 (MAATMNKTPATTFLLIPAAASLVLLLAAAASVEA). Asp91 serves as the catalytic Nucleophile. The active site involves His427. A glycan (N-linked (GlcNAc...) asparagine) is linked at Asn440. Residues Asp479 and Glu488 contribute to the active site. Positions 509-530 (ADNTPEYTPAPNAPSPSNGGSP) are disordered.

The protein belongs to the glycosyl hydrolase 9 (cellulase E) family.

The protein localises to the secreted. The catalysed reaction is Endohydrolysis of (1-&gt;4)-beta-D-glucosidic linkages in cellulose, lichenin and cereal beta-D-glucans.. The sequence is that of Endoglucanase 13 (GLU6) from Oryza sativa subsp. indica (Rice).